Consider the following 378-residue polypeptide: Protein RecA (378 aa).

An ATP-binding site is contributed by 79 to 86 (GPESSGKT).

Belongs to the RecA family.

It is found in the cytoplasm. Can catalyze the hydrolysis of ATP in the presence of single-stranded DNA, the ATP-dependent uptake of single-stranded DNA by duplex DNA, and the ATP-dependent hybridization of homologous single-stranded DNAs. It interacts with LexA causing its activation and leading to its autocatalytic cleavage. In Streptococcus pyogenes serotype M1, this protein is Protein RecA.